Consider the following 380-residue polypeptide: Ubiquitin-like protein 7 (380 aa).

The Ubiquitin-like domain maps to 18 to 98 (APKSILQLPE…VLRKSWPEPD (81 aa)). Residues 200–313 (TPMPGADSSS…SSGVQSGTPI (114 aa)) are disordered. Residues 206-221 (DSSSRSMPSSSYRDMP) show a composition bias toward low complexity. Serine 230 is subject to Phosphoserine. Low complexity-rich tracts occupy residues 239–253 (STRS…SSRP) and 270–293 (SELA…TPGT). Residues 294–313 (QGHSSGTSPMSSGVQSGTPI) show a composition bias toward polar residues. A UBA domain is found at 333-377 (SLQIQWQPQLQQLRDMGIQDDELSLRALQATGGDIQAALELIFAG).

As to quaternary structure, binds ubiquitin. Interacts with MAVS; this interaction enhances TRIM21-dependent 'Lys-27'-linked polyubiquitination of MAVS. Post-translationally, deubiquitinated by OTUD4 which stabilizes UBL7 expression.

Its function is as follows. Interferon-stimulated protein that positively regulates RNA virus-triggered innate immune signaling. Mechanistically, promotes 'Lys-27'-linked polyubiquitination of MAVS through TRIM21 leading to enhanced the IFN signaling pathway. The sequence is that of Ubiquitin-like protein 7 (Ubl7) from Mus musculus (Mouse).